Reading from the N-terminus, the 359-residue chain is 3-dehydroquinate synthase (359 aa).

NAD(+)-binding positions include 72 to 77, 106 to 110, 130 to 131, Lys143, Lys152, and 170 to 173; these read DGEQYK, GVIGD, TT, and CLKT. Positions 185, 248, and 265 each coordinate Zn(2+).

The protein belongs to the sugar phosphate cyclases superfamily. Dehydroquinate synthase family. The cofactor is Co(2+). Requires Zn(2+) as cofactor. NAD(+) serves as cofactor.

The protein resides in the cytoplasm. The enzyme catalyses 7-phospho-2-dehydro-3-deoxy-D-arabino-heptonate = 3-dehydroquinate + phosphate. The protein operates within metabolic intermediate biosynthesis; chorismate biosynthesis; chorismate from D-erythrose 4-phosphate and phosphoenolpyruvate: step 2/7. In terms of biological role, catalyzes the conversion of 3-deoxy-D-arabino-heptulosonate 7-phosphate (DAHP) to dehydroquinate (DHQ). The protein is 3-dehydroquinate synthase of Photobacterium profundum (strain SS9).